The sequence spans 435 residues: MNIVILGTQWGDEGKGKIVDMLTEDVAAVVRFQGGHNAGHTLIIDGEKTILRLIPSGILREGVLCLIGNGVVLSPPALMEEIEELNAKGIPVTERLRISSACNLLLPYHVALDKAREAELGTKAIGTTGRGIGPAYEDKVARRGIRAMDLLHPDQLLEKIKKATAYHNIQLEHYYHQTPLDYQSIYNQLMEFREKIKPMIGDVSALLGNLRRQNKHIIFEGAQGSLLDIDLGTYPYVTSSNTTAGSAATGSGFGPLYFDRVLGITKAYVTRVGAGPFPTELTNEEGKKMAKRGNEFGSVTGRPRRCGWFDVISMRRTIQINSLTGIVLTKLDVLDEFAKIHLCTAYRCDGEVVNEPPFDQSLLESCEPVYEEMPGWQTSTYGLTDYSEMPKEARNYISRLEELLGVPITIISTGPDRKHTIVRQAVFNQVITAKG.

GTP contacts are provided by residues G11 to K17 and G39 to T41. D12 acts as the Proton acceptor in catalysis. Mg(2+) is bound by residues D12 and G39. IMP contacts are provided by residues D12–K15, N37–H40, T128, R142, Q223, T238, and R302. H40 functions as the Proton donor in the catalytic mechanism. S298–R304 lines the substrate pocket. Residues R304, K330–D332, and S412–G414 each bind GTP.

It belongs to the adenylosuccinate synthetase family. Homodimer. Mg(2+) is required as a cofactor.

The protein localises to the cytoplasm. It catalyses the reaction IMP + L-aspartate + GTP = N(6)-(1,2-dicarboxyethyl)-AMP + GDP + phosphate + 2 H(+). It participates in purine metabolism; AMP biosynthesis via de novo pathway; AMP from IMP: step 1/2. Its function is as follows. Plays an important role in the de novo pathway of purine nucleotide biosynthesis. Catalyzes the first committed step in the biosynthesis of AMP from IMP. The chain is Adenylosuccinate synthetase from Coxiella burnetii (strain CbuK_Q154) (Coxiella burnetii (strain Q154)).